We begin with the raw amino-acid sequence, 140 residues long: Pre-mRNA-splicing factor NTC20 (140 aa).

Serine 139 is modified (phosphoserine).

In terms of assembly, belongs to the NTC complex (or PRP19-associated complex), composed of at least CEF1, CLF1, ISY1, NTC20, SNT309, SYF1, SYF2, and PRP19. The NTC complex associates with the spliceosome after the release of the U1 and U4 snRNAs and forms the CWC spliceosome subcomplex (or CEF1-associated complex) reminiscent of a late-stage spliceosome composed also of the U2, U5 and U6 snRNAs and at least BUD13, BRR2, CDC40, CUS1, CWC2, CWC15, CWC21, CWC22, CWC23, CWC24, CWC25, CWC27, ECM2, HSH155, IST3, LEA1, MSL1, PRP8, PRP9, PRP11, PRP21, PRP22, PRP45, PRP46, SLU7, SMB1, SMD1, SMD2, SMD3, SMX2, SMX3, SNU114, SPP2, RSE1 and YJU2. Interacts with CEF1, CLF1, ISY1, PRP46, and SYF1.

The protein resides in the nucleus. In terms of biological role, involved in pre-mRNA splicing. As a component of the NTC complex, associates to the spliceosome to mediate conformational rearrangement or to stabilize the structure of the spliceosome after U4 snRNA dissociation, which leads to spliceosome maturation. In Saccharomyces cerevisiae (strain ATCC 204508 / S288c) (Baker's yeast), this protein is Pre-mRNA-splicing factor NTC20 (NTC20).